The chain runs to 404 residues: Argininosuccinate synthase (404 aa).

9 to 17 (AYSGGLDTS) lines the ATP pocket. Y86 contacts L-citrulline. Residue G116 coordinates ATP. Residues T118, N122, and D123 each contribute to the L-aspartate site. Position 122 (N122) interacts with L-citrulline. L-citrulline contacts are provided by R126, S174, S183, E259, and Y271.

It belongs to the argininosuccinate synthase family. Type 1 subfamily. As to quaternary structure, homotetramer.

The protein localises to the cytoplasm. The enzyme catalyses L-citrulline + L-aspartate + ATP = 2-(N(omega)-L-arginino)succinate + AMP + diphosphate + H(+). The protein operates within amino-acid biosynthesis; L-arginine biosynthesis; L-arginine from L-ornithine and carbamoyl phosphate: step 2/3. The sequence is that of Argininosuccinate synthase from Listeria monocytogenes serotype 4b (strain CLIP80459).